The following is a 199-amino-acid chain: METRALSVNLREVKKNGAAKLRRLGQVPAVVYHKGEATVAISVEEISLNKLVHSSESHMIDLQYPDGKSVRSFIKDVQFDPVTDRVIHADFQLFSTDEVVEMEVPIHLEGECPGVKIGGGKIQINVHTLPLKGKPEAMPEHFTIDVSALELGQTLHIRDLQAIAPEGVQILGDADTSVVSVVAPRKEAETAAEGATAEA.

The protein belongs to the bacterial ribosomal protein bL25 family. CTC subfamily. As to quaternary structure, part of the 50S ribosomal subunit; part of the 5S rRNA/L5/L18/L25 subcomplex. Contacts the 5S rRNA. Binds to the 5S rRNA independently of L5 and L18.

Its function is as follows. This is one of the proteins that binds to the 5S RNA in the ribosome where it forms part of the central protuberance. The sequence is that of Large ribosomal subunit protein bL25 from Chlorobaculum tepidum (strain ATCC 49652 / DSM 12025 / NBRC 103806 / TLS) (Chlorobium tepidum).